Reading from the N-terminus, the 342-residue chain is Ribosomal RNA small subunit methyltransferase H (342 aa).

S-adenosyl-L-methionine is bound by residues 36–38 (GGH), D56, F82, D100, and Q107. The segment at 309–342 (ENRESGMGKGHGAAASRFPTPDSRFPTSPNGDAP) is disordered. The span at 333–342 (FPTSPNGDAP) shows a compositional bias: polar residues.

This sequence belongs to the methyltransferase superfamily. RsmH family.

It localises to the cytoplasm. It carries out the reaction cytidine(1402) in 16S rRNA + S-adenosyl-L-methionine = N(4)-methylcytidine(1402) in 16S rRNA + S-adenosyl-L-homocysteine + H(+). Functionally, specifically methylates the N4 position of cytidine in position 1402 (C1402) of 16S rRNA. This chain is Ribosomal RNA small subunit methyltransferase H, found in Xanthomonas campestris pv. campestris (strain 8004).